The primary structure comprises 882 residues: Lon protease homolog, mitochondrial (882 aa).

A mitochondrion-targeting transit peptide spans 1–34; it reads MIHVLKSRSTLLTASSIVRTSVGSSSRYSQTRTY. The region spanning 68–281 is the Lon N-terminal domain; that stretch reads TLGLPLVSRP…KALVLLNRER (214 aa). ATP is bound at residue 435 to 442; it reads GPPGTGKT. The Lon proteolytic domain maps to 687 to 878; the sequence is PLPHGIVMGL…DKVYEVAFSS (192 aa). Catalysis depends on residues S784 and K827.

It belongs to the peptidase S16 family. Homohexamer or homoheptamer. Organized in a ring with a central cavity.

It localises to the mitochondrion matrix. The enzyme catalyses Hydrolysis of proteins in presence of ATP.. Its function is as follows. ATP-dependent serine protease that mediates the selective degradation of misfolded, unassembled or oxidatively damaged polypeptides as well as certain short-lived regulatory proteins in the mitochondrial matrix. May also have a chaperone function in the assembly of inner membrane protein complexes. Participates in the regulation of mitochondrial gene expression and in the maintenance of the integrity of the mitochondrial genome. Binds to mitochondrial DNA in a site-specific manner. The chain is Lon protease homolog, mitochondrial from Phaeodactylum tricornutum (strain CCAP 1055/1).